The following is a 384-amino-acid chain: Terpene cyclase ascI (384 aa).

The first 25 residues, 1-25, serve as a signal peptide directing secretion; sequence MPQLAGKLILAGLIPLGAWVLHGFA. The chain crosses the membrane as a helical span at residues 82-102; that stretch reads LSLHAFMFAGQGVPLLVLNML. Asn-109 carries N-linked (GlcNAc...) asparagine glycosylation. The next 4 helical transmembrane spans lie at 119-139, 164-184, 194-214, and 235-255; these read VFGI…YLFL, AVGF…SLPH, VLSV…AYFA, and GAVY…TFAI. N-linked (GlcNAc...) asparagine glycosylation is present at Asn-258. Transmembrane regions (helical) follow at residues 291–311 and 330–350; these read WFLQ…AIGI and IALR…ALSL. Asn-372 carries N-linked (GlcNAc...) asparagine glycosylation.

The protein belongs to the membrane-bound ascI terpene cyclase family.

It is found in the membrane. It catalyses the reaction 16-hydroxy-ilicicolin A epoxide = ascofuranol. The protein operates within secondary metabolite biosynthesis; terpenoid biosynthesis. Functionally, epoxide hydrolase; part of the asc-2 gene cluster that mediates the biosynthesis of ascofuranone, a strong inhibitor of cyanide-insensitive alternative oxidases and a promising drug candidate against African trypanosomiasis. The first step in the pathway is performed by the non-reducing polyketide synthase ascC that produces orsellinic acid by condensing acetyl-CoA with 3 malonyl-CoA units. Orsellinic acid is then prenylated by the prenyltransferase ascA to yield ilicicolinic acid B. Ilicicolinic acid B is further reduced to ilicicolin B by the reductase ascB. The halogenase ascD then chlorinates ilicicolin B to produce ilicicolin A which is converted to ilicicolin A epoxide by the cytochrome P450 monooxygenase ascE that catalyzes stereoselective epoxidation of the terminal double bond of the prenyl group. Ilicicolin A epoxide is the last common precursor for the biosynthesis of ascofuranone and ascochlorin. The terpene cyclase ascF produces a monocyclic terpene, and the cyclization reaction is proposed to be initiated by protonation of the terminal epoxide of ilicicolin A epoxide to generate a monocyclic tertiarycation, which is followed by a series of hydride and methyl shifts with abstraction of proton, leading to the formation of the (14S,15R,19R)-trimethylcyclohexanone ring structure of ilicicolin C, which is finally reduced to ascochlorin by the dehydrogenase ascG. On the other hand, ilicicolin A epoxide is hydroxylated by the cytochrome P450 monooxygenase ascH, and the resultant product is cyclized by the terpene cyclase ascI to ascofuranol via protonation-initiated epoxide ring opening, which facilitates the 6-endo-tet cyclization to form the tetrahy-drofuran ring. Finally, ascofuranol is oxidized into ascofuranone by ascJ. This is Terpene cyclase ascI from Acremonium egyptiacum (Oospora egyptiaca).